The sequence spans 562 residues: MSDQSVPSFRWVQSLKRGLSVWTTPVKADVLNDTRALLSGLDFSKVASVQRMMRRERRDDNDLTNLRDNLKEVDSLMTMRSSQKNMFLKVGSLSKDELMELSSDLNKLKEKVQRSERIIGGSGVYQGNFTTTHLTRRSEILQLVGIQRPGLNRRGGVVKIWDIKEPALLINQFGSTPAVTISCMAEQGGETLNDVVQGLTDLGLLYTAKFPNLGDLEALSNKHSCLKVITQEESQINISGFNLSLSAAVKAGACLVDGGNMLETIKVEESTFTTIIKTLLEIKSKERMFVDITPGQRNPYENLLYKLCLSGEGWPYIASRSQIKGRAWDNTVIEFDVSPRKPPVPIRNGGSPVLTTLKPEVEEQIKRSIESLSVHDTTWIDIEGPPFDPVEMAIYQPDSLKYIHCYRKPNDVKSFKDQSKYCHGILLKDIEFARPGIISAIIKHLPKSMVFTAQGSEDIRRLFDMHGRQDLKIVDVKFTAEQSRVFEELTWKRFEHLCDKHKGIVIKSKKKGTTPASTNAHCALMDCIMFSGVLLGAIPNDKPRRLLPLDILFREPDTTVVL.

Positions 53–238 are binding site for the cap structure m7GTP; it reads MRRERRDDND…ITQEESQINI (186 aa). Mn(2+) contacts are provided by D381 and E383. 4 residues coordinate Zn(2+): E391, C498, H501, and C522. Residue D526 coordinates Mn(2+).

The protein belongs to the arenaviridae nucleocapsid protein family. In terms of assembly, homomultimerizes to form the nucleocapsid. Binds to viral genomic RNA. Interacts with glycoprotein G2. Interacts with protein Z; this interaction probably directs the encapsidated genome to budding sites. Interacts with protein L; this interaction does not interfere with Z-L interaction. Interacts with host IKBKE (via Protein kinase domain); the interaction inhibits IKBKE kinase activity.

The protein resides in the virion. Its subcellular location is the host cytoplasm. Functionally, encapsidates the genome, protecting it from nucleases. The encapsidated genomic RNA is termed the nucleocapsid (NC). Serves as template for viral transcription and replication. The increased presence of protein N in host cell does not seem to trigger the switch from transcription to replication as observed in other negative strain RNA viruses. Through the interaction with host IKBKE, strongly inhibits the phosphorylation and nuclear translocation of host IRF3, a protein involved in interferon activation pathway, leading to the inhibition of interferon-beta and IRF3-dependent promoters activation. Also encodes a functional 3'-5' exoribonuclease that degrades preferentially dsRNA substrates and thereby participates in the suppression of interferon induction. This Tamiami mammarenavirus (isolate Rat/United States/W 10777/1964) (TAMV) protein is Nucleoprotein.